A 288-amino-acid polypeptide reads, in one-letter code: Alpha/beta hydrolase domain-containing protein 17B (288 aa).

Catalysis depends on charge relay system residues S170, D235, and H264.

It belongs to the AB hydrolase superfamily. ABHD17 family. Post-translationally, palmitoylated on cysteine residues located in a cysteine cluster at the N-terminus which promotes membrane localization.

Its subcellular location is the cell membrane. The protein localises to the recycling endosome membrane. It localises to the cell projection. The protein resides in the dendritic spine. It is found in the postsynaptic density membrane. The enzyme catalyses S-hexadecanoyl-L-cysteinyl-[protein] + H2O = L-cysteinyl-[protein] + hexadecanoate + H(+). Its function is as follows. Hydrolyzes fatty acids from S-acylated cysteine residues in proteins. The protein is Alpha/beta hydrolase domain-containing protein 17B of Xenopus tropicalis (Western clawed frog).